Reading from the N-terminus, the 290-residue chain is 2-dehydro-3-deoxy-phosphogluconate/2-dehydro-3-deoxy-6-phosphogalactonate aldolase (290 aa).

Residues 42 to 43 (TT), 129 to 131 (YNY), and 155 to 157 (KDT) contribute to the substrate site. Residue Lys-155 is the Schiff-base intermediate with substrate of the active site.

Belongs to the DapA family. KDPG aldolase subfamily. In terms of assembly, homotetramer; dimer of dimers.

The enzyme catalyses 2-dehydro-3-deoxy-6-phospho-D-gluconate = D-glyceraldehyde 3-phosphate + pyruvate. The catalysed reaction is 2-dehydro-3-deoxy-6-phospho-D-galactonate = D-glyceraldehyde 3-phosphate + pyruvate. It participates in carbohydrate acid metabolism; 2-dehydro-3-deoxy-D-gluconate degradation; D-glyceraldehyde 3-phosphate and pyruvate from 2-dehydro-3-deoxy-D-gluconate: step 2/2. In terms of biological role, involved in the degradation of glucose and galactose via the Entner-Doudoroff pathway. Catalyzes the reversible cleavage of 2-keto-3-deoxy-6-phosphogluconate (KDPG) and 2-keto-3-deoxygluconate (KDG) forming pyruvate and glyceraldehyde 3-phosphate or glyceraldehyde, respectively. It is also able to catalyze the reversible cleavage of 2-keto-3-deoxy-6-phosphogalactonate (KDPGal) and 2-keto-3-deoxygalactonate (KDGal). The polypeptide is 2-dehydro-3-deoxy-phosphogluconate/2-dehydro-3-deoxy-6-phosphogalactonate aldolase (kdgA) (Sulfurisphaera tokodaii (strain DSM 16993 / JCM 10545 / NBRC 100140 / 7) (Sulfolobus tokodaii)).